Reading from the N-terminus, the 417-residue chain is Putative transporter AmpG 1 (417 aa).

The next 12 helical transmembrane spans lie at 7–27 (LCII…TGNT), 42–62 (IGIL…APIF), 78–98 (LSWI…FSFL), 104–124 (LLLF…QDTI), 143–163 (GIYI…AIYL), 171–191 (EIYK…IVGI), 225–245 (ALKP…LVLY), 273–293 (VGKF…GVIM), 301–321 (SIFL…FLEI), 328–348 (LLFI…TAYI), 366–386 (FLSS…GYMV), and 389–409 (FGWQ…LLIL).

This sequence belongs to the major facilitator superfamily.

It is found in the cell inner membrane. This Rickettsia conorii (strain ATCC VR-613 / Malish 7) protein is Putative transporter AmpG 1 (ampG1).